The following is a 1357-amino-acid chain: MSYSFTEKKRIRKSFAKRASVLPIPFLLATQIESYAAFLQANLEPDQRAPEGLQAAFLSIFPIESHSRNARLDFVNYVLGAPPFDVKECQQRGLTYASPLRAKVRLTIMDKEASKPTVREVKEQEVYMGEIPLMTNTGSFVINGTERVIVSQLHRSPGVFFEHDRGKTHSSGKLLFSARIIPYRGSWLDFEFDPKDYLYFRVDRRRKMPITVLLKAIGYTPEQILENFFSFDSFHISRKSILFELLPERLRGDTARFDILSKSGKVIVQKDKRITVKHVREMQQAGIDRLEVPEDFLLGRVLGHNVVDKETGEILALANDEITETLLGKLRDANVEEIRTIYTNDLDQGAYISQTLKIDETADEMAAQVAIYRMMRPGEPPTEEAVKALFIGLFYAPERYDLSVVGRMKFNRRVGKTELDGPTTLSNEDIIAVIRILVELRNGRGEIDDIDHLGNRRVRSVGELAENQFRSGLVRVERAVKERLSQAESENLMPHDLINAKPVSAAVREFFGSSQLSQFMDQTNPLSEITHKRRVSALGPGGLTRERAGFEVRDVHPTHYGRVCPIETPEGPNIGLINSLALYAQTNEYGFMETPYRKVTDGLVTDEIHFLSAIEEGQYVIAQANAELDGDGRFTNDIVSCRHKNEFTLATPDRIEYMDVAPAQIVSVAASLIPFLEHDDANRALMGSNMQRQAVPCLRAEKPLVGTGIERVVAVDSGTAVKAVRGGVVDYVDASRIVVRVHDIETRAGEVGVDIYNLTKYTRSNQNTNINQRPLVKVGDVIARGDVVADGASTDKGELALGQNMLVAFMPWTGYNFEDSILISERIVANDRFTSIHIEELSVVSRDTKLGTEEITGDISNLSEAQLGRLDASGIVHIGAEVEAGDVLVGKVTPKGETQLTPEEKLLRAIFGEKASDVKDTSLRVPSGISGTVIDVQVFTREGIERDKRAQQIIDDELKRYKKDLADQMRIVEADAFVRIERLLIGKIATGGPKKLAKGATLTKEYLESIDPHHWFDIRLADEGASVQLEQIEEGLAQKRKAFDAAFEEKKKKLTQGDELPPGVQKMVKVYVAVKRRLQPGDKMAGRHGNKGVISKIVPVEDMPYMADGTPVDVVLNPLGVPSRMNVGQILETHLGWAAKGLGQKIGDMLRAGKEIVELRAFLDKIYNTSGKPEDIASLTDGEIADLAQNLQDGVPFATPVFDGATEQEIKDMLELAGLPRSGQVTLHDGRTGEAFDRPVTVGYMHVLKLHHLVDDKMHARSTGPYSLVTQQPLGGKAQFGGQRFGEMEVWALEAYGSAYTLQEMLTVKSDDVNGRTKVYESIVKGDHKIDAGMPESFNVLVKEIRSLAMDIDLERH.

This sequence belongs to the RNA polymerase beta chain family. In terms of assembly, the RNAP catalytic core consists of 2 alpha, 1 beta, 1 beta' and 1 omega subunit. When a sigma factor is associated with the core the holoenzyme is formed, which can initiate transcription.

It catalyses the reaction RNA(n) + a ribonucleoside 5'-triphosphate = RNA(n+1) + diphosphate. In terms of biological role, DNA-dependent RNA polymerase catalyzes the transcription of DNA into RNA using the four ribonucleoside triphosphates as substrates. This is DNA-directed RNA polymerase subunit beta from Nitrosospira multiformis (strain ATCC 25196 / NCIMB 11849 / C 71).